Consider the following 180-residue polypeptide: Large ribosomal subunit protein uL5 (180 aa).

This sequence belongs to the universal ribosomal protein uL5 family. In terms of assembly, part of the 50S ribosomal subunit; part of the 5S rRNA/L5/L18/L25 subcomplex. Contacts the 5S rRNA and the P site tRNA. Forms a bridge to the 30S subunit in the 70S ribosome.

In terms of biological role, this is one of the proteins that bind and probably mediate the attachment of the 5S RNA into the large ribosomal subunit, where it forms part of the central protuberance. In the 70S ribosome it contacts protein S13 of the 30S subunit (bridge B1b), connecting the 2 subunits; this bridge is implicated in subunit movement. Contacts the P site tRNA; the 5S rRNA and some of its associated proteins might help stabilize positioning of ribosome-bound tRNAs. The protein is Large ribosomal subunit protein uL5 of Mycoplasma mycoides subsp. mycoides SC (strain CCUG 32753 / NCTC 10114 / PG1).